The primary structure comprises 164 residues: Lipoprotein signal peptidase (164 aa).

Transmembrane regions (helical) follow at residues 11-31 (YWVLALAAIVLDQWSKWAVLS), 41-61 (VIPSFFDLTLVYNPGAAFSFL), 64-84 (QGGWQKYFFLVLAVAVSAYLV), and 92-112 (FATLGKTGAAMIIGGALGNVI). Residues aspartate 122 and aspartate 140 contribute to the active site. Residues 132–152 (FYPAFNIADSFICVGAVLAVL) traverse the membrane as a helical segment.

The protein belongs to the peptidase A8 family.

It is found in the cell inner membrane. The enzyme catalyses Release of signal peptides from bacterial membrane prolipoproteins. Hydrolyzes -Xaa-Yaa-Zaa-|-(S,diacylglyceryl)Cys-, in which Xaa is hydrophobic (preferably Leu), and Yaa (Ala or Ser) and Zaa (Gly or Ala) have small, neutral side chains.. It participates in protein modification; lipoprotein biosynthesis (signal peptide cleavage). Functionally, this protein specifically catalyzes the removal of signal peptides from prolipoproteins. The polypeptide is Lipoprotein signal peptidase (Neisseria meningitidis serogroup C (strain 053442)).